Reading from the N-terminus, the 245-residue chain is Orotidine 5'-phosphate decarboxylase (245 aa).

Substrate contacts are provided by residues D22, K44, 71–80, T131, R192, Q201, G221, and R222; that span reads DLKFHDIPNT. K73 serves as the catalytic Proton donor.

This sequence belongs to the OMP decarboxylase family. Type 1 subfamily. Homodimer.

It carries out the reaction orotidine 5'-phosphate + H(+) = UMP + CO2. It participates in pyrimidine metabolism; UMP biosynthesis via de novo pathway; UMP from orotate: step 2/2. Catalyzes the decarboxylation of orotidine 5'-monophosphate (OMP) to uridine 5'-monophosphate (UMP). This Escherichia coli O139:H28 (strain E24377A / ETEC) protein is Orotidine 5'-phosphate decarboxylase.